The sequence spans 229 residues: 7-cyano-7-deazaguanine synthase (229 aa).

15 to 25 lines the ATP pocket; that stretch reads LSGGLDSTTCL. Residues Cys192, Cys202, Cys205, and Cys208 each coordinate Zn(2+).

Belongs to the QueC family. The cofactor is Zn(2+).

The catalysed reaction is 7-carboxy-7-deazaguanine + NH4(+) + ATP = 7-cyano-7-deazaguanine + ADP + phosphate + H2O + H(+). It participates in purine metabolism; 7-cyano-7-deazaguanine biosynthesis. In terms of biological role, catalyzes the ATP-dependent conversion of 7-carboxy-7-deazaguanine (CDG) to 7-cyano-7-deazaguanine (preQ(0)). The protein is 7-cyano-7-deazaguanine synthase of Acinetobacter baylyi (strain ATCC 33305 / BD413 / ADP1).